Consider the following 238-residue polypeptide: Adapter protein MecA (238 aa).

A disordered region spans residues 108 to 133; that stretch reads EDENEESVQGNQQQRRSHASDHSKRA.

Belongs to the MecA family. Homodimer.

In terms of biological role, enables the recognition and targeting of unfolded and aggregated proteins to the ClpC protease or to other proteins involved in proteolysis. The polypeptide is Adapter protein MecA (Staphylococcus carnosus (strain TM300)).